A 160-amino-acid chain; its full sequence is Conopressin/conophysin, isoform 2 (160 aa).

Residues 1–30 form the signal peptide; it reads MKCSVLQMSRLSWAMCLMLLMLLLLGTAQG. An intrachain disulfide couples C31 to C36. G39 is modified (glycine amide). Positions 40–47 are excised as a propeptide; it reads GKRAVDAL. 7 disulfide bridges follow: C53–C97, C56–C70, C64–C87, C71–C77, C104–C118, C112–C130, and C119–C124.

This sequence belongs to the vasopressin/oxytocin family. In terms of tissue distribution, expressed by the venom gland.

It is found in the secreted. Its function is as follows. Targets vasopressin-oxytocin related receptors. In Conus monile (Necklace cone), this protein is Conopressin/conophysin, isoform 2.